A 169-amino-acid chain; its full sequence is Large ribosomal subunit protein uL5 (169 aa).

This sequence belongs to the universal ribosomal protein uL5 family. Part of the 50S ribosomal subunit; contacts the 5S rRNA and probably tRNA. Forms a bridge to the 30S subunit in the 70S ribosome.

In terms of biological role, this is one of the proteins that bind and probably mediate the attachment of the 5S RNA into the large ribosomal subunit, where it forms part of the central protuberance. In the 70S ribosome it contacts protein S13 of the 30S subunit (bridge B1b), connecting the 2 subunits; this bridge is implicated in subunit movement. May contact the P site tRNA; the 5S rRNA and some of its associated proteins might help stabilize positioning of ribosome-bound tRNAs. In Cenarchaeum symbiosum (strain A), this protein is Large ribosomal subunit protein uL5.